The following is a 1493-amino-acid chain: MDRKGKGKQVAGSDSYSGGQKRKNSVEFRDEGLRIKKRKNPEVLQFFEESAEVGYYGGSSDEDDDGLGFLNDMEDEPEVEESSKAGKGEKGKSSFVFPKEEDLNEEEFDRIMEERYKPGSGFLRYADDDIKDAIEMDALAPTSKDPPIWKVKCAIGRERRSVFCLMHKFVELRKIGTKLEIISVFSVDHVKGFIFIEADKEHDVLEACKSLVGIYATRMVLLPKAETPNLLTVQKKTKKVSEGTWARVKNGKYKGDLAQIVAVSDTRNKALIKLIPRIDIQALTQKYGGGVTVQKGQTPAPRLISSSELEEFRPLIQVRRDRDTGITFEHLDSLMLKDGYLYKKVSLDSISSWGVIPTKDELLKFTPVDRKETGDVEWISEIYGEERKKKILPTCREGGKGEGSGGGKGEGSGGGKGEGSRGGKGEGSSDFKSESSYELYNLVCFSRKDFGLIVGVDDKGDGYKVLKEGIDGPVVVTVGKKEMQNGPFDSKFTALDLNKKQISVNDVVKISKGPSEGKQGVVRQVYRGIIFLYDESEEENGGYFCCKSQSCEKVKLFTEESNEKTGGFDGTAFEDFVSSPKSPLSPEKEWQPRERYNSSNQGDIGSTYSIGQKLRIRVGPLKGYLCRVIALRYSDVTVKLDSQHKIFTVKSEHLAEVRDRNTVLSTSGDAGTGSFQPFGMLGTESSTGDWAIGAGTSSEGGNWNIGGPSTDSHESLNIERNMVQLCREKNPWGGSKPTSDVSPTVADDNTSAWANAAAENKPASASDQPGGWNPWGKTPASEAGTVSGWGDTSASNVEASSWEKQGASTSNVADLGSWGTHGGSSGGNKQDEDSVWGKLCEASESSQKKEESSWGKKGGSDGESSWGNKDGNSSASKKDGVSWGQQDKGSDESKGGSAWSNQCGDFGSGKKKDGSSGWNKSAEDSNANSKGVPDWGQPNDGSSWGKKGDGAASWGKKDDGGSWGKKDDGNKDDGGSSWGKKDDGQKDDGGSSWEKKFDGGSSWGKKDDGGSSWGKKDDGGSLWGKKDDGGSSWGKEDDGGSLWGKKDDGESSWGKKDDGESSWGKKDDGGSSWGKKDEGGYSEQTFDRGGRGFGGRRGGGRRGGRDQFGRGSSFGNSEDPAPWSKPSGGSSWGKQDGDGGGSSWGKENDAGGGSSWGKQDNGVGSSWGKQNDGSGGGSSWGKQNDAGGGSSWGKQDSGGDGSSWGKQDGGGDSGSAWGKQNNTSGGSSWGKQSDAGGGSSWGKQDGGGGGSSWGKQDGGGGSGSAWGKQNETSNGSSWGKQNDSGGGSSWGKQDGGGGGSSWGKQNDGGGGSSWGKQGDGGSKPWNEHSGGGRGFGERRGGGGFRGGRNQSGRGGRSFDGGRSSSWKTDNQENTWKSDQSGGSDWKKGWGEDSNNSKPSGSSAGGCAGNWPSWDTNSKKETNDKPGDDSKSAWGTSNDQVNTDNNNDSWNKKPNNDVGTSGEADNAWGGKTNAVAPSPSGSAAWGTGDKKTGW.

Disordered stretches follow at residues methionine 1 to arginine 34 and glycine 54 to valine 96. Residues lysine 21–phenylalanine 28 carry the Nuclear localization signal motif. Positions asparagine 24–arginine 34 are enriched in basic and acidic residues. Residues serine 60 to glutamate 80 are compositionally biased toward acidic residues. Positions glutamate 81–lysine 92 are enriched in basic and acidic residues. One can recognise a KOW 1 domain in the interval lysine 239–threonine 266. The interval proline 393–lysine 432 is disordered. Positions glycine 401–glycine 417 are enriched in gly residues. The segment covering glutamate 418–lysine 432 has biased composition (basic and acidic residues). The KOW 2 domain maps to glutamine 501–glycine 528. A disordered region spans residues serine 578–glycine 602. The span at proline 586–tyrosine 596 shows a compositional bias: basic and acidic residues. One can recognise a KOW 3 domain in the interval threonine 607–serine 634. Disordered stretches follow at residues isoleucine 692 to aspartate 711, glutamate 728 to aspartate 747, and alanine 757 to tryptophan 1493. Repeat unit 1 spans residues tryptophan 732–valine 741. The tract at residues tryptophan 732 to tryptophan 1493 is 42 X 9 AA approximate WG/GW-rich tandem repeats. Residues alanine 757–aspartate 767 are compositionally biased toward low complexity. A run of 37 repeats spans residues tryptophan 775–glycine 784, tryptophan 789–valine 797, tryptophan 818–glycine 827, tryptophan 836–serine 845, tryptophan 854–glutamate 863, tryptophan 866–alanine 875, tryptophan 883–glutamate 892, glycine 917–asparagine 926, tryptophan 935–serine 943, tryptophan 944–serine 953, tryptophan 954–serine 962, tryptophan 963–aspartate 972, tryptophan 978–aspartate 987, tryptophan 1003–serine 1012, tryptophan 1013–leucine 1022, tryptophan 1023–serine 1032, tryptophan 1033–leucine 1042, tryptophan 1043–serine 1052, tryptophan 1053–serine 1062, tryptophan 1063–serine 1072, tryptophan 1073–serine 1082, tryptophan 1132–glycine 1141, tryptophan 1144–glycine 1153, tryptophan 1156–serine 1165, tryptophan 1167–glycine 1176, tryptophan 1180–glycine 1189, tryptophan 1192–glycine 1201, tryptophan 1204–serine 1213, tryptophan 1217–glycine 1226, tryptophan 1229–glycine 1238, tryptophan 1241–glycine 1250, tryptophan 1253–serine 1262, tryptophan 1266–glycine 1275, tryptophan 1278–glycine 1287, tryptophan 1290–glycine 1299, tryptophan 1302–glycine 1311, and tryptophan 1314–lysine 1323. Polar residues predominate over residues glycine 790–valine 812. Residues serine 846–serine 860 show a composition bias toward basic and acidic residues. The span at tryptophan 866–alanine 875 shows a compositional bias: polar residues. A compositionally biased stretch (basic and acidic residues) spans glycine 955–glycine 1090. A compositionally biased stretch (low complexity) spans proline 1122–lysine 1134. The span at tryptophan 1156–aspartate 1172 shows a compositional bias: polar residues. Residues alanine 1186–serine 1213 are compositionally biased toward gly residues. The segment covering glycine 1218 to lysine 1231 has biased composition (polar residues). Residues alanine 1235–serine 1264 show a composition bias toward gly residues. Residues asparagine 1270–aspartate 1283 show a composition bias toward polar residues. Residues serine 1284–glycine 1321 are compositionally biased toward gly residues. Composition is skewed to polar residues over residues tryptophan 1366–glycine 1382 and aspartate 1392–serine 1401. Repeat 39 spans residues tryptophan 1389 to proline 1398. Basic and acidic residues predominate over residues asparagine 1416–lysine 1430. A compositionally biased stretch (polar residues) spans alanine 1432 to threonine 1442. Tandem repeats lie at residues tryptophan 1433 to threonine 1442, tryptophan 1467 to alanine 1475, and tryptophan 1484 to tryptophan 1493.

Interacts with AGO4 via its C-terminal region and with RNA transcripts. Binds chromatin at loci subject to transcriptional silencing downstream of RNA Polymerase V, but independently from the presence of 24-nt siRNA.

It localises to the nucleus. Its subcellular location is the nucleoplasm. Its function is as follows. Effector of RNA-directed DNA methylation (RdDM) triggered by small interfering RNAs (siRNAs, 24-nt RNAs). Functions as an adapter protein that binds scaffold transcripts generated by polymerase V and recruits AGO4 and AGO4-bound siRNAs to form an RdDM effector complex. Promotes the expression of 24-nt RNAs. Required for the initial establishment of DNA methylation. Together with AGO4, required for transcriptional gene silencing (TGS) by DNA methylation and repressive histone modifications (H3K9me2) of several chromatin loci. The polypeptide is Protein RNA-directed DNA methylation 3 (Arabidopsis thaliana (Mouse-ear cress)).